A 456-amino-acid chain; its full sequence is Phospholipase A1 member A (456 aa).

The N-terminal stretch at 1–25 (MPPGPWESCFWVGGLILWLSVGSSG) is a signal peptide. The N-linked (GlcNAc...) asparagine glycan is linked to N79. Residue S166 is the Nucleophile of the active site. D190 (charge relay system) is an active-site residue. Cysteines 245 and 258 form a disulfide. The active-site Charge relay system is the H260. Cystine bridges form between C282–C293 and C296–C304. Residue N365 is glycosylated (N-linked (GlcNAc...) asparagine). The segment at 374–456 (IPKQQRYGKG…VSCDLKIACV (83 aa)) is involved in the recognition of diacyl-phospholipids.

This sequence belongs to the AB hydrolase superfamily. Lipase family. In terms of tissue distribution, widely expressed. Expressed in placenta, prostate and liver. Weakly or not expressed in skin, leukocytes, platelets, colon, spleen, lung, muscle and kidney.

It is found in the secreted. It carries out the reaction a 1,2-diacyl-sn-glycero-3-phospho-L-serine + H2O = a 2-acyl-sn-glycero-3-phospho-L-serine + a fatty acid + H(+). The catalysed reaction is 1,2-di-(9Z)-octadecenoyl-sn-glycero-3-phospho-L-serine + H2O = 2-(9Z-octadecenoyl)-sn-glycero-3-phospho-L-serine + (9Z)-octadecenoate + H(+). It catalyses the reaction 1-hexadecanoyl-2-(5Z,8Z,11Z,14Z-eicosatetraenoyl)-sn-glycero-3-phospho-L-serine + H2O = 2-(5Z,8Z,11Z,14Z)-eicosatetraenoyl-sn-glycero-3-phospho-L-serine + hexadecanoate + H(+). The enzyme catalyses a 1-acyl-sn-glycero-3-phospho-L-serine + H2O = sn-glycero-3-phospho-L-serine + a fatty acid + H(+). It carries out the reaction 1-(9Z-octadecenoyl)-sn-glycero-3-phospho-L-serine + H2O = sn-glycero-3-phospho-L-serine + (9Z)-octadecenoate + H(+). Its function is as follows. Hydrolyzes the ester bond of the acyl group attached at the sn-1 position of phosphatidylserines (phospholipase A1 activity) and 1-acyl-2-lysophosphatidylserines (lysophospholipase activity) in the pathway of phosphatidylserines acyl chain remodeling. Cleaves phosphatidylserines exposed on the outer leaflet of the plasma membrane of apoptotic cells producing 2-acyl-1-lysophosphatidylserines, which in turn enhance mast cell activation and histamine production. Has no activity toward other glycerophospholipids including phosphatidylcholines, phosphatidylethanolamines, phosphatidic acids or phosphatidylinositols, or glycerolipids such as triolein. Hydrolyzes lyso-PS but not PS. In Homo sapiens (Human), this protein is Phospholipase A1 member A.